A 287-amino-acid chain; its full sequence is 4-hydroxybenzoate octaprenyltransferase (287 aa).

8 helical membrane-spanning segments follow: residues 19–39 (PIGS…AADG), 43–63 (LHVL…GCVI), 94–116 (LALA…PLVI), 135–155 (FFAI…PMGF), 160–180 (GEVP…AVAY), 207–227 (FDVA…GWVG), 234–254 (ALYF…YTLI), and 269–286 (NNWL…DYLI).

Belongs to the UbiA prenyltransferase family. Requires Mg(2+) as cofactor.

The protein localises to the cell inner membrane. It carries out the reaction all-trans-octaprenyl diphosphate + 4-hydroxybenzoate = 4-hydroxy-3-(all-trans-octaprenyl)benzoate + diphosphate. The protein operates within cofactor biosynthesis; ubiquinone biosynthesis. Catalyzes the prenylation of para-hydroxybenzoate (PHB) with an all-trans polyprenyl group. Mediates the second step in the final reaction sequence of ubiquinone-8 (UQ-8) biosynthesis, which is the condensation of the polyisoprenoid side chain with PHB, generating the first membrane-bound Q intermediate 3-octaprenyl-4-hydroxybenzoate. The sequence is that of 4-hydroxybenzoate octaprenyltransferase from Azoarcus sp. (strain BH72).